Reading from the N-terminus, the 280-residue chain is Protein YibA (280 aa).

This chain is Protein YibA (yibA), found in Escherichia coli O157:H7.